A 646-amino-acid polypeptide reads, in one-letter code: Calcium-dependent protein kinase 2 (646 aa).

A lipid anchor (N-myristoyl glycine) is attached at Gly2. Residue Cys5 is the site of S-palmitoyl cysteine attachment. A disordered region spans residues 27-169 (RIGAEQASSS…HMRRVSSAGL (143 aa)). The segment covering 32 to 43 (QASSSSHGNGQV) has biased composition (polar residues). Basic and acidic residues-rich tracts occupy residues 73-119 (PETK…KREV) and 126-157 (AKPETKSESKPETTKPETTSETKPETKAEPQK). Residues 186 to 444 (YSLGRKLGQG…AHQVLCHPWV (259 aa)) form the Protein kinase domain. ATP-binding positions include 192–200 (LGQGQFGTT) and Lys215. Asp310 serves as the catalytic Proton acceptor. At Ser350 the chain carries Phosphoserine. Residues 450–480 (APDKPLDSAVLSRMKQFSAMNKFKKMALRVI) form an autoinhibitory domain region. 4 EF-hand domains span residues 487 to 522 (EEIAGLKQMFKMIDADNSGQITFEELKAGLKRVGAN), 523 to 558 (LKESEILDLMQAADVDNSGTIDYKEFIAATLHLNKI), 559 to 592 (EREDHLFAAFSYFDKDESGFITPDELQQACEEFG), and 593 to 628 (VEDARIEEMMRDVDQDKDGRIDYNEFVAMMQKGSIM). Ca(2+) is bound by residues Asp500, Asp502, Ser504, Gln506, Glu511, Asp536, Asp538, Ser540, Thr542, Glu547, Asp572, Asp574, Ser576, Glu583, Asp606, Asp608, Asp610, Arg612, and Glu617.

Belongs to the protein kinase superfamily. Ser/Thr protein kinase family. CDPK subfamily. Interacts with 14-3-3 proteins.

It is found in the endoplasmic reticulum membrane. The catalysed reaction is L-seryl-[protein] + ATP = O-phospho-L-seryl-[protein] + ADP + H(+). It carries out the reaction L-threonyl-[protein] + ATP = O-phospho-L-threonyl-[protein] + ADP + H(+). Activated by calcium. Autophosphorylation may play an important role in the regulation of the kinase activity. In terms of biological role, may play a role in signal transduction pathways that involve calcium as a second messenger. The chain is Calcium-dependent protein kinase 2 (CPK2) from Arabidopsis thaliana (Mouse-ear cress).